We begin with the raw amino-acid sequence, 315 residues long: Large ribosomal subunit protein uL29m (315 aa).

This sequence belongs to the universal ribosomal protein uL29 family. As to quaternary structure, component of the mitochondrial large ribosomal subunit. Mature mitochondrial ribosomes consist of a small (37S) and a large (54S) subunit. The 37S subunit contains at least 33 different proteins and 1 molecule of RNA (15S). The 54S subunit contains at least 45 different proteins and 1 molecule of RNA (21S).

The protein resides in the mitochondrion. This Candida glabrata (strain ATCC 2001 / BCRC 20586 / JCM 3761 / NBRC 0622 / NRRL Y-65 / CBS 138) (Yeast) protein is Large ribosomal subunit protein uL29m (MRPL4).